Reading from the N-terminus, the 104-residue chain is Complex III assembly factor LYRM7 (104 aa).

Position 60 is a phosphoserine (serine 60).

The protein belongs to the complex I LYR family. In terms of assembly, interacts with UQCRFS1.

It localises to the mitochondrion matrix. In terms of biological role, assembly factor required for Rieske Fe-S protein UQCRFS1 incorporation into the cytochrome b-c1 (CIII) complex. Functions as a chaperone, binding to this subunit within the mitochondrial matrix and stabilizing it prior to its translocation and insertion into the late CIII dimeric intermediate within the mitochondrial inner membrane. The sequence is that of Complex III assembly factor LYRM7 (LYRM7) from Pongo abelii (Sumatran orangutan).